The following is a 700-amino-acid chain: Polyribonucleotide nucleotidyltransferase (700 aa).

Residues aspartate 485 and aspartate 491 each contribute to the Mg(2+) site. Residues 552-611 (PRITTLKINPEKIRDVIGKGGATIRALTEETGTTIELEDDGTVKIASANGDATKEAIRRI) form the KH domain. One can recognise an S1 motif domain in the interval 621-689 (GTVYNGKVVR…RQGRVRLSMK (69 aa)).

The protein belongs to the polyribonucleotide nucleotidyltransferase family. In terms of assembly, component of the RNA degradosome, which is a multiprotein complex involved in RNA processing and mRNA degradation. Mg(2+) serves as cofactor.

The protein localises to the cytoplasm. It carries out the reaction RNA(n+1) + phosphate = RNA(n) + a ribonucleoside 5'-diphosphate. Functionally, involved in mRNA degradation. Catalyzes the phosphorolysis of single-stranded polyribonucleotides processively in the 3'- to 5'-direction. This Shewanella loihica (strain ATCC BAA-1088 / PV-4) protein is Polyribonucleotide nucleotidyltransferase.